A 70-amino-acid polypeptide reads, in one-letter code: Brevinin-1MT2 (70 aa).

The first 22 residues, 1-22, serve as a signal peptide directing secretion; sequence MFTLKKSMLLLFFLGTINLSLC. A propeptide spanning residues 23 to 44 is cleaved from the precursor; sequence EQERNADEEERRDDDEMDVEVE. A disulfide bond links C64 and C70.

This sequence belongs to the frog skin active peptide (FSAP) family. Brevinin subfamily. As to expression, expressed by the skin glands.

It is found in the secreted. Its function is as follows. Antimicrobial peptide with activity against a variety of Gram-negative and Gram-positive bacteria and against fungi. Shows strong hemolytic activity against human erythrocytes. This Amolops mantzorum (Sichuan torrent frog) protein is Brevinin-1MT2.